The primary structure comprises 101 residues: Urease subunit beta (101 aa).

This sequence belongs to the urease beta subunit family. In terms of assembly, heterotrimer of UreA (gamma), UreB (beta) and UreC (alpha) subunits. Three heterotrimers associate to form the active enzyme.

Its subcellular location is the cytoplasm. It carries out the reaction urea + 2 H2O + H(+) = hydrogencarbonate + 2 NH4(+). Its pathway is nitrogen metabolism; urea degradation; CO(2) and NH(3) from urea (urease route): step 1/1. In Rhodopseudomonas palustris (strain ATCC BAA-98 / CGA009), this protein is Urease subunit beta.